The chain runs to 60 residues: Putative mercuric resistance protein (60 aa).

The sequence is that of Putative mercuric resistance protein from Pseudomonas aeruginosa.